A 132-amino-acid chain; its full sequence is uncharacterized protein (132 aa).

4 helical membrane passes run 7–29 (LALL…PTLF), 44–62 (VFPV…SLFL), 69–88 (LFLS…EFIV), and 108–130 (GVSM…ILIF).

It is found in the cell membrane. This is an uncharacterized protein from Aquifex aeolicus (strain VF5).